The sequence spans 349 residues: DNA polymerase IV (349 aa).

The UmuC domain maps to 3–187 (VLFVDFDYFF…LDISKVPGVG (185 aa)). Mg(2+) contacts are provided by Asp-7 and Asp-105. The active site involves Glu-106.

The protein belongs to the DNA polymerase type-Y family. As to quaternary structure, monomer. It depends on Mg(2+) as a cofactor.

The protein resides in the cytoplasm. It catalyses the reaction DNA(n) + a 2'-deoxyribonucleoside 5'-triphosphate = DNA(n+1) + diphosphate. Its function is as follows. Poorly processive, error-prone DNA polymerase involved in untargeted mutagenesis. Copies undamaged DNA at stalled replication forks, which arise in vivo from mismatched or misaligned primer ends. These misaligned primers can be extended by PolIV. Exhibits no 3'-5' exonuclease (proofreading) activity. May be involved in translesional synthesis. The protein is DNA polymerase IV of Metallosphaera sedula (strain ATCC 51363 / DSM 5348 / JCM 9185 / NBRC 15509 / TH2).